A 600-amino-acid chain; its full sequence is NADH-quinone oxidoreductase subunit C/D (600 aa).

An NADH dehydrogenase I subunit C region spans residues 1-190 (MVNNMTDLTA…DPFELTKAKQ (190 aa)). Residues 214-600 (DFMFLNLGPN…IDFVMSDVDR (387 aa)) form an NADH dehydrogenase I subunit D region.

In the N-terminal section; belongs to the complex I 30 kDa subunit family. It in the C-terminal section; belongs to the complex I 49 kDa subunit family. In terms of assembly, NDH-1 is composed of 13 different subunits. Subunits NuoB, CD, E, F, and G constitute the peripheral sector of the complex.

It localises to the cell inner membrane. It carries out the reaction a quinone + NADH + 5 H(+)(in) = a quinol + NAD(+) + 4 H(+)(out). In terms of biological role, NDH-1 shuttles electrons from NADH, via FMN and iron-sulfur (Fe-S) centers, to quinones in the respiratory chain. The immediate electron acceptor for the enzyme in this species is believed to be ubiquinone. Couples the redox reaction to proton translocation (for every two electrons transferred, four hydrogen ions are translocated across the cytoplasmic membrane), and thus conserves the redox energy in a proton gradient. The sequence is that of NADH-quinone oxidoreductase subunit C/D from Salmonella arizonae (strain ATCC BAA-731 / CDC346-86 / RSK2980).